The sequence spans 612 residues: RNA-binding protein MRN1 (612 aa).

Residues 1–28 (MVVSYNNNNNNNNNNNNNNISNNNNNNN) are compositionally biased toward low complexity. 2 disordered regions span residues 1-57 (MVVS…TYAS) and 105-125 (PTQF…SQEQ). Polar residues-rich tracts occupy residues 42 to 57 (YQQS…TYAS) and 115 to 125 (DSQQQRFSQEQ). 4 RRM domains span residues 201–274 (RTVY…WGKP), 292–379 (RNVY…KTQQ), 431–504 (RTVY…WGKH), and 522–602 (RNVY…FGKD).

The protein resides in the cytoplasm. RNA-binding protein that binds specific categories of mRNAs, including those that contain upstream open reading frames (uORFs) and internal ribosome entry sites (IRES). Probably involved in translational regulation. This Saccharomyces cerevisiae (strain ATCC 204508 / S288c) (Baker's yeast) protein is RNA-binding protein MRN1 (MRN1).